The following is a 569-amino-acid chain: Probable protein phosphatase 2C BIPP2C1 (569 aa).

Disordered stretches follow at residues 120-214 (EVSP…KVTG) and 251-279 (SLDD…GSSI). Over residues 179-188 (ESERGSDADG) the composition is skewed to basic and acidic residues. The 236-residue stretch at 329–564 (AAMLPHPSKV…DDVTVVVSVV (236 aa)) folds into the PPM-type phosphatase domain. Aspartate 358, glycine 359, aspartate 488, and aspartate 555 together coordinate Mn(2+).

This sequence belongs to the PP2C family. The cofactor is Mg(2+). Requires Mn(2+) as cofactor.

It carries out the reaction O-phospho-L-seryl-[protein] + H2O = L-seryl-[protein] + phosphate. The enzyme catalyses O-phospho-L-threonyl-[protein] + H2O = L-threonyl-[protein] + phosphate. Its function is as follows. May play a role in responses to biotic and abiotic stresses. The chain is Probable protein phosphatase 2C BIPP2C1 (BIPP2C1) from Oryza sativa subsp. japonica (Rice).